The primary structure comprises 132 residues: Small ribosomal subunit protein uS11 (132 aa).

Belongs to the universal ribosomal protein uS11 family. As to quaternary structure, part of the 30S ribosomal subunit. Interacts with proteins S7 and S18. Binds to IF-3.

Functionally, located on the platform of the 30S subunit, it bridges several disparate RNA helices of the 16S rRNA. Forms part of the Shine-Dalgarno cleft in the 70S ribosome. This Chlamydia trachomatis serovar A (strain ATCC VR-571B / DSM 19440 / HAR-13) protein is Small ribosomal subunit protein uS11.